The following is a 217-amino-acid chain: Fucoxanthin-chlorophyll a-c binding protein A, chloroplastic (217 aa).

The N-terminal 39 residues, 1–39 (MKSAVMAVACAAAPGLRRPSAFNGAALTTSAKSSSAMKM), are a transit peptide targeting the chloroplast. The next 3 membrane-spanning stretches (helical) occupy residues 81 to 101 (IAML…PGML), 122 to 142 (IPPA…LAVM), and 183 to 203 (GRAA…NNKP).

It belongs to the fucoxanthin chlorophyll protein family. In terms of assembly, the LHC complex of chromophytic algae is composed of fucoxanthin, chlorophyll A and C bound non-covalently by fucoxanthin chlorophyll proteins (FCPs). The ratio of pigments in this LHC is; fucoxanthin: chlorophyll C: chlorophyll A; (0.6-1): (0.1-0.3): (1).

The protein localises to the plastid. It is found in the chloroplast thylakoid membrane. Its function is as follows. The light-harvesting complex (LHC) functions as a light receptor, it captures and delivers excitation energy to photosystems with which it is closely associated. Energy is transferred from the carotenoid and chlorophyll C (or B) to chlorophyll A and the photosynthetic reaction centers where it is used to synthesize ATP and reducing power. The polypeptide is Fucoxanthin-chlorophyll a-c binding protein A, chloroplastic (FCPA) (Macrocystis pyrifera (Giant kelp)).